Here is a 196-residue protein sequence, read N- to C-terminus: DnaA initiator-associating protein DiaA (196 aa).

One can recognise an SIS domain in the interval 34 to 196 (LVQSLLNGNK…DNTLFPHQDD (163 aa)).

Belongs to the SIS family. DiaA subfamily. In terms of assembly, homotetramer; dimer of dimers.

Functionally, required for the timely initiation of chromosomal replication via direct interactions with the DnaA initiator protein. This is DnaA initiator-associating protein DiaA from Cronobacter sakazakii (strain ATCC BAA-894) (Enterobacter sakazakii).